We begin with the raw amino-acid sequence, 301 residues long: XIAP-associated factor 1 (301 aa).

A TRAF-type zinc finger spans residues 22-99; it reads LHEAYCLRFL…KLDMQLSKLE (78 aa). Residues 189–257 form a disordered region; the sequence is ILPSSLPSQA…KPRTSSPRGD (69 aa). The span at 193–205 shows a compositional bias: polar residues; that stretch reads SLPSQAAENQTST.

Interacts with BIRC4; the interaction is not detected in. Interacts with BIRC1, BIRC2, BIRC3, BIRC7 and BIRC8. Part of an complex consisting of BIRC4, XAF1 and BIRC5; the complex formation requires IFN-beta stimulation. Interacts with RNF114, the interaction increases XAF1 stability and proapoptotic effects, and may regulate IFN signaling. In terms of tissue distribution, widely expressed. Expression is frequently down-regulated in cancer cell lines. Isoform 5 is widely expressed. Expressed in placenta (at protein level).

The protein localises to the cytoplasm. Its subcellular location is the nucleus. It is found in the mitochondrion. Its function is as follows. Seems to function as a negative regulator of members of the IAP (inhibitor of apoptosis protein) family. Inhibits anti-caspase activity of BIRC4. Induces cleavage and inactivation of BIRC4 independent of caspase activation. Mediates TNF-alpha-induced apoptosis and is involved in apoptosis in trophoblast cells. May inhibit BIRC4 indirectly by activating the mitochondrial apoptosis pathway. After translocation to mitochondria, promotes translocation of BAX to mitochondria and cytochrome c release from mitochondria. Seems to promote the redistribution of BIRC4 from the cytoplasm to the nucleus, probably independent of BIRC4 inactivation which seems to occur in the cytoplasm. The BIRC4-XAF1 complex mediates down-regulation of BIRC5/survivin; the process requires the E3 ligase activity of BIRC4. Seems to be involved in cellular sensitivity to the proapoptotic actions of TRAIL. May be a tumor suppressor by mediating apoptosis resistance of cancer cells. The polypeptide is XIAP-associated factor 1 (XAF1) (Homo sapiens (Human)).